The following is a 509-amino-acid chain: H/ACA ribonucleoprotein complex subunit DKC1 (509 aa).

The segment at M1–E25 is disordered. A2 carries the post-translational modification N-acetylalanine. Positions A2–P22 are nucleolar localization. Residues P11–R20 show a composition bias toward basic residues. Glycyl lysine isopeptide (Lys-Gly) (interchain with G-Cter in SUMO2) cross-links involve residues K21, K40, and K44. D126 (nucleophile) is an active-site residue. A Glycyl lysine isopeptide (Lys-Gly) (interchain with G-Cter in SUMO2) cross-link involves residue K192. In terms of domain architecture, PUA spans H297 to M372. The tract at residues W381–G509 is disordered. S388 carries the phosphoserine modification. Residues K395 and K425 each participate in a glycyl lysine isopeptide (Lys-Gly) (interchain with G-Cter in SUMO2) cross-link. Residues D416–K425 show a composition bias toward basic and acidic residues. The segment at K447–G509 is nuclear and nucleolar localization. A phosphoserine mark is found at S452 and S454. The residue at position 460 (T460) is a Phosphothreonine. Residues R466 to K475 show a composition bias toward basic residues. Acidic residues predominate over residues G481–G490. The residue at position 508 (S508) is a Phosphoserine.

Belongs to the pseudouridine synthase TruB family. In terms of assembly, part of the H/ACA small nucleolar ribonucleoprotein (H/ACA snoRNP) complex, which contains NHP2/NOLA2, GAR1/NOLA1, NOP10/NOLA3, and DKC1/NOLA4, which is presumed to be the catalytic subunit. The complex contains a stable core formed by binding of one or two NOP10-DKC1 heterodimers to NHP2; GAR1 subsequently binds to this core via DKC1. The complex binds a box H/ACA small nucleolar RNA (snoRNA), which may target the specific site of modification within the RNA substrate. During assembly, the complex contains NAF1 instead of GAR1/NOLA1. The complex also interacts with TERC, which contains a 3'-terminal domain related to the box H/ACA snoRNAs. Specific interactions with snoRNAs or TERC are mediated by GAR1 and NHP2. Associates with NOLC1/NOPP140. H/ACA snoRNPs interact with the SMN complex, consisting of SMN1 or SMN2, GEMIN2/SIP1, DDX20/GEMIN3, and GEMIN4. This is mediated by interaction between GAR1 and SMN1 or SMN2. The SMN complex may be required for correct assembly of the H/ACA snoRNP complex. Component of the telomerase holoenzyme complex composed of one molecule of TERT, one molecule of WRAP53/TCAB1, two molecules of H/ACA ribonucleoprotein complex subunits DKC1, NOP10, NHP2 and GAR1, and a telomerase RNA template component (TERC). The telomerase holoenzyme complex is associated with TEP1, SMG6/EST1A and POT1. Interacts with SHQ1; this interaction may lead to the stabilization of DKC1, from the time of its synthesis until its association with NOP10, NHP2, and NAF1 at the nascent H/ACA RNA. Interacts with HMBOX1. Interacts with DHX36.

Its subcellular location is the nucleus. It localises to the nucleolus. It is found in the cajal body. It catalyses the reaction uridine in 5S rRNA = pseudouridine in 5S rRNA. Functionally, catalytic subunit of H/ACA small nucleolar ribonucleoprotein (H/ACA snoRNP) complex, which catalyzes pseudouridylation of rRNA. This involves the isomerization of uridine such that the ribose is subsequently attached to C5, instead of the normal N1. Each rRNA can contain up to 100 pseudouridine ('psi') residues, which may serve to stabilize the conformation of rRNAs. Required for ribosome biogenesis and telomere maintenance. Also required for correct processing or intranuclear trafficking of TERC, the RNA component of the telomerase reverse transcriptase (TERT) holoenzyme. In Rattus norvegicus (Rat), this protein is H/ACA ribonucleoprotein complex subunit DKC1 (Dkc1).